The following is a 319-amino-acid chain: Transmembrane and ubiquitin-like domain-containing protein 2 (319 aa).

Residues 36-56 (VMVVAGVVALTLALVLAWLST) traverse the membrane as a helical segment. 2 disordered regions span residues 88 to 128 (VNQG…ARGE) and 145 to 165 (RQAG…DGSC). Residues 95–111 (PTEHPHPSGGNDDKAEE) are compositionally biased toward basic and acidic residues. The 74-residue stretch at 173–246 (INVRLKFLND…IHCHRSPPGA (74 aa)) folds into the Ubiquitin-like domain. 2 consecutive transmembrane segments (helical) span residues 264–284 (LGVN…GVVW) and 298–318 (ATIS…GMYG).

The protein localises to the membrane. The polypeptide is Transmembrane and ubiquitin-like domain-containing protein 2 (Tmub2) (Mus musculus (Mouse)).